The chain runs to 85 residues: Cytochrome c2 (85 aa).

Heme c contacts are provided by Cys-12, Cys-15, His-16, and Met-61.

Belongs to the cytochrome c family. Post-translationally, binds 1 heme c group covalently per subunit.

Its function is as follows. Cytochrome c2 is found mainly in purple, non-sulfur, photosynthetic bacteria where it functions as the electron donor to the oxidized bacteriochlorophyll in the photophosphorylation pathway. However, it may also have a role in the respiratory chain and is found in some non-photosynthetic bacteria. In Rubrivivax gelatinosus (Rhodocyclus gelatinosus), this protein is Cytochrome c2.